Here is a 261-residue protein sequence, read N- to C-terminus: Ribosomal RNA small subunit methyltransferase G (261 aa).

Residues Gly94, Leu99, 117 to 119 (EST), 145 to 146 (VE), and Arg164 each bind S-adenosyl-L-methionine.

It belongs to the methyltransferase superfamily. RNA methyltransferase RsmG family.

It is found in the cytoplasm. Functionally, specifically methylates the N7 position of a guanine in 16S rRNA. This chain is Ribosomal RNA small subunit methyltransferase G, found in Rubrobacter xylanophilus (strain DSM 9941 / JCM 11954 / NBRC 16129 / PRD-1).